Consider the following 248-residue polypeptide: Probable proteasome subunit alpha type-3 (248 aa).

The protein belongs to the peptidase T1A family. As to quaternary structure, the 26S proteasome consists of a 20S proteasome core and two 19S regulatory subunits. The 20S proteasome core is composed of 28 subunits that are arranged in four stacked rings, resulting in a barrel-shaped structure. The two end rings are each formed by seven alpha subunits, and the two central rings are each formed by seven beta subunits. The catalytic chamber with the active sites is on the inside of the barrel.

It localises to the cytoplasm. Its subcellular location is the nucleus. In terms of biological role, the proteasome is a multicatalytic proteinase complex which is characterized by its ability to cleave peptides with Arg, Phe, Tyr, Leu, and Glu adjacent to the leaving group at neutral or slightly basic pH. The proteasome has an ATP-dependent proteolytic activity. The chain is Probable proteasome subunit alpha type-3 from Schizosaccharomyces pombe (strain 972 / ATCC 24843) (Fission yeast).